Reading from the N-terminus, the 311-residue chain is N-acetylmuramic acid 6-phosphate etherase (311 aa).

The SIS domain maps to 66–230; the sequence is VVEAFEADGR…TTAAMVRLGK (165 aa). Glu94 serves as the catalytic Proton donor. The active site involves Glu125.

This sequence belongs to the GCKR-like family. MurNAc-6-P etherase subfamily. Homodimer.

It carries out the reaction N-acetyl-D-muramate 6-phosphate + H2O = N-acetyl-D-glucosamine 6-phosphate + (R)-lactate. It functions in the pathway amino-sugar metabolism; N-acetylmuramate degradation. Its function is as follows. Specifically catalyzes the cleavage of the D-lactyl ether substituent of MurNAc 6-phosphate, producing GlcNAc 6-phosphate and D-lactate. The protein is N-acetylmuramic acid 6-phosphate etherase of Salinibacter ruber (strain DSM 13855 / M31).